The chain runs to 170 residues: NADH-quinone oxidoreductase subunit B (170 aa).

Positions 46, 47, 111, and 141 each coordinate [4Fe-4S] cluster.

The protein belongs to the complex I 20 kDa subunit family. NDH-1 is composed of 14 different subunits. Subunits NuoB, C, D, E, F, and G constitute the peripheral sector of the complex. It depends on [4Fe-4S] cluster as a cofactor.

Its subcellular location is the cell membrane. The catalysed reaction is a quinone + NADH + 5 H(+)(in) = a quinol + NAD(+) + 4 H(+)(out). In terms of biological role, NDH-1 shuttles electrons from NADH, via FMN and iron-sulfur (Fe-S) centers, to quinones in the respiratory chain. The immediate electron acceptor for the enzyme in this species is believed to be a menaquinone. Couples the redox reaction to proton translocation (for every two electrons transferred, four hydrogen ions are translocated across the cytoplasmic membrane), and thus conserves the redox energy in a proton gradient. The chain is NADH-quinone oxidoreductase subunit B from Geobacillus thermodenitrificans (strain NG80-2).